The primary structure comprises 199 residues: Nicotinamide riboside kinase 1 (199 aa).

Residue 10 to 18 participates in ATP binding; sequence GVTNSGKTT. Positions 17 and 36 each coordinate Mg(2+). Residue aspartate 36 is the Proton acceptor of the active site. Residues 36-39 and 55-56 contribute to the substrate site; these read DDFF and YD. Arginine 128 provides a ligand contact to ATP. Substrate is bound by residues arginine 129 and 134–135; that span reads YQ. Residues 132–134 and 172–174 each bind ATP; these read RVY and KSE.

It belongs to the uridine kinase family. NRK subfamily. As to quaternary structure, monomer.

The enzyme catalyses beta-nicotinamide D-riboside + ATP = beta-nicotinamide D-ribonucleotide + ADP + H(+). The catalysed reaction is beta-D-ribosylnicotinate + ATP = nicotinate beta-D-ribonucleotide + ADP + H(+). The protein operates within cofactor biosynthesis; NAD(+) biosynthesis. In terms of biological role, catalyzes the phosphorylation of nicotinamide riboside (NR) and nicotinic acid riboside (NaR) to form nicotinamide mononucleotide (NMN) and nicotinic acid mononucleotide (NaMN). The enzyme also phosphorylates the antitumor drugs tiazofurin and 3-deazaguanosine. This is Nicotinamide riboside kinase 1 (NMRK1) from Homo sapiens (Human).